The primary structure comprises 385 residues: 28S rRNA (uridine-N(3))-methyltransferase (385 aa).

2 disordered regions span residues 1-35 (MAER…KKKW) and 47-72 (QRAQ…NQGR). 2 stretches are compositionally biased toward basic and acidic residues: residues 15–35 (HGQR…KKKW) and 47–58 (QRAQEEEAKRQE). Residues Arg-293, Gly-313, Asn-342, and Thr-343 each coordinate S-adenosyl-L-methionine.

The protein belongs to the class IV-like SAM-binding methyltransferase superfamily. As to quaternary structure, interacts with INCA1.

Its subcellular location is the cytoplasm. It is found in the cytoskeleton. The protein localises to the spindle. It localises to the chromosome. The protein resides in the centromere. Its subcellular location is the kinetochore. It is found in the microtubule organizing center. The protein localises to the centrosome. The catalysed reaction is uridine in 28S rRNA + S-adenosyl-L-methionine = N(3)-methyluridine in 28S rRNA + S-adenosyl-L-homocysteine + H(+). Its function is as follows. S-adenosyl-L-methionine-dependent methyltransferase that specifically methylates the N3 position of a uridine in 28S rRNA. Required for association of the centrosomes with the poles of the bipolar mitotic spindle during metaphase. Also involved in chromosome alignment. May promote centrosome maturation probably by recruiting A-kinase anchor protein AKAP9 to centrosomes in early mitosis. Binds specifically to miRNA MIR145 hairpin, regulates MIR145 expression at a postranscriptional level. This chain is 28S rRNA (uridine-N(3))-methyltransferase, found in Mus musculus (Mouse).